The sequence spans 339 residues: Putative adenosine/adenine deaminase (339 aa).

Residues His-16, His-18, and His-200 each coordinate Zn(2+). His-18 is a substrate binding site. The Proton donor role is filled by Glu-203. Asp-281 contacts Zn(2+). Asp-282 serves as a coordination point for substrate.

The protein belongs to the metallo-dependent hydrolases superfamily. Adenosine and AMP deaminases family. It depends on Zn(2+) as a cofactor.

Its function is as follows. Putative nucleoside deaminase. May catalyze the hydrolytic deamination of adenosine or some similar substrate and play a role in purine metabolism. This Streptomyces virginiae (Streptomyces cinnamonensis) protein is Putative adenosine/adenine deaminase.